Consider the following 62-residue polypeptide: UPF0291 protein CLI_2672 (62 aa).

The protein belongs to the UPF0291 family.

Its subcellular location is the cytoplasm. The protein is UPF0291 protein CLI_2672 of Clostridium botulinum (strain Langeland / NCTC 10281 / Type F).